We begin with the raw amino-acid sequence, 168 residues long: Cell division inhibitor SulA (168 aa).

The interval 106–112 is ftsZ binding; that stretch reads ALLTGNY. Residues 161–168 form a lon protease binding region; sequence KIHSSLYH.

This sequence belongs to the SulA family. Interacts with FtsZ. Is rapidly cleaved and degraded by the Lon protease once DNA damage is repaired.

Its function is as follows. Component of the SOS system and an inhibitor of cell division. Accumulation of SulA causes rapid cessation of cell division and the appearance of long, non-septate filaments. In the presence of GTP, binds a polymerization-competent form of FtsZ in a 1:1 ratio, thus inhibiting FtsZ polymerization and therefore preventing it from participating in the assembly of the Z ring. This mechanism prevents the premature segregation of damaged DNA to daughter cells during cell division. The sequence is that of Cell division inhibitor SulA from Serratia proteamaculans (strain 568).